A 291-amino-acid polypeptide reads, in one-letter code: Phosphate import ATP-binding protein PstB (291 aa).

Residues Met1 to Asp21 are disordered. An ABC transporter domain is found at Tyr45–Ile286. Residue Gly77 to Ser84 coordinates ATP.

This sequence belongs to the ABC transporter superfamily. Phosphate importer (TC 3.A.1.7) family. In terms of assembly, the complex is composed of two ATP-binding proteins (PstB), two transmembrane proteins (PstC and PstA) and a solute-binding protein (PstS).

It is found in the cell membrane. It catalyses the reaction phosphate(out) + ATP + H2O = ADP + 2 phosphate(in) + H(+). Functionally, part of the ABC transporter complex PstSACB involved in phosphate import. Responsible for energy coupling to the transport system. The chain is Phosphate import ATP-binding protein PstB from Staphylococcus saprophyticus subsp. saprophyticus (strain ATCC 15305 / DSM 20229 / NCIMB 8711 / NCTC 7292 / S-41).